The chain runs to 101 residues: Apolipoprotein C-II (101 aa).

Residues 1 to 22 (MGIRYLLVLVLVLLVLGCEVQG) form the signal peptide. Residues 66–74 (TVDEKIREI) form a lipid binding region. Residues 78-101 (STAAVSTYAGIFTDQLLSMLKGDQ) are lipoprotein lipase cofactor.

Belongs to the apolipoprotein C2 family. Proapolipoprotein C-II is synthesized as a sialic acid containing glycoprotein which is subsequently desialylated prior to its proteolytic processing. In terms of processing, proapolipoprotein C-II, the major form found in plasma undergoes proteolytic cleavage of its N-terminal hexapeptide to generate apolipoprotein C-II, which occurs as the minor form in plasma.

The protein localises to the secreted. Functionally, component of chylomicrons, very low-density lipoproteins (VLDL), low-density lipoproteins (LDL), and high-density lipoproteins (HDL) in plasma. Plays an important role in lipoprotein metabolism as an activator of lipoprotein lipase. Both proapolipoprotein C-II and apolipoprotein C-II can activate lipoprotein lipase. In Mirounga angustirostris (Northern elephant seal), this protein is Apolipoprotein C-II (APOC2).